An 88-amino-acid chain; its full sequence is Small ribosomal subunit protein bS20 (88 aa).

Residues 1–27 (MANSKSAKKRALQSEKRRQHNASRRSM) are disordered.

This sequence belongs to the bacterial ribosomal protein bS20 family.

Its function is as follows. Binds directly to 16S ribosomal RNA. This is Small ribosomal subunit protein bS20 from Shewanella denitrificans (strain OS217 / ATCC BAA-1090 / DSM 15013).